Reading from the N-terminus, the 483-residue chain is MTVVSCEIQDETVVVSPLYQDDCDEERGDQECSERVVINISGLRFETQLRTLSRFPTTLLGDPRKRMRFFDPLRNEYFFDRNRPSFDAILYYYQSGGKLRRPVNVTMDIFMEEMTFYEIEEEAIDMFKEDEGMIIEVERAMPDNEFQRQLWLLFEYPESSGPARMIAVVSVSVIVISIVIFCLETLPQFREDTSANLPLSNHHTTNGTTLHKKPNLFTDPFFMVETLCIVWFSFEFLVRFLSCPSKPAFFKNAMNSIDILAIAPYFITLGLELAEQQEAGSEQAMSLAILRVIRLVRVFRIFKLSRHSKGLQILGQTLHASISELGLLIFFLLIGVILFSSAVYFAEADDPESGFSSIPAAFWWAVVSMTTVGYGDMCPVTIGGKIVGSMCAIAGVLTIALPVPVIVSNFNYFYHRERNDEETAVYTHVTCGQQNASFGEFKSTSDSRQSLTKSEDTEEDSCETIRLTHFNPFEHYTGKLTDV.

At 1 to 165 (MTVVSCEIQD…YPESSGPARM (165 aa)) the chain is on the cytoplasmic side. The chain crosses the membrane as a helical span at residues 166-186 (IAVVSVSVIVISIVIFCLETL). Topologically, residues 187–220 (PQFREDTSANLPLSNHHTTNGTTLHKKPNLFTDP) are extracellular. Residues 221–241 (FFMVETLCIVWFSFEFLVRFL) traverse the membrane as a helical segment. Residues 242–252 (SCPSKPAFFKN) lie on the Cytoplasmic side of the membrane. C243 carries the S-palmitoyl cysteine lipid modification. The helical transmembrane segment at 253–273 (AMNSIDILAIAPYFITLGLEL) threads the bilayer. Over 274–324 (AEQQEAGSEQAMSLAILRVIRLVRVFRIFKLSRHSKGLQILGQTLHASISE) the chain is Extracellular. Residues 325 to 345 (LGLLIFFLLIGVILFSSAVYF) traverse the membrane as a helical; Voltage-sensor segment. Residues 346–353 (AEADDPES) are Cytoplasmic-facing. A helical transmembrane segment spans residues 354–374 (GFSSIPAAFWWAVVSMTTVGY). Positions 371–376 (TVGYGD) match the Selectivity filter motif. At 375 to 385 (GDMCPVTIGGK) the chain is on the extracellular side. A helical membrane pass occupies residues 386 to 406 (IVGSMCAIAGVLTIALPVPVI). The Cytoplasmic segment spans residues 407–483 (VSNFNYFYHR…EHYTGKLTDV (77 aa)). Y426 bears the Phosphotyrosine mark. Phosphothreonine is present on T430. Residues 440-452 (EFKSTSDSRQSLT) show a composition bias toward polar residues. The segment at 440-459 (EFKSTSDSRQSLTKSEDTEE) is disordered. The PDZ-binding signature appears at 481–483 (TDV).

This sequence belongs to the potassium channel family. A (Shaker) (TC 1.A.1.2) subfamily. As to quaternary structure, heterotetramer of potassium channel proteins. Binds PDZ domains of dlg1, dlg2 and dlg4. In terms of tissue distribution, expressed in oligodendrocytes and astrocytes.

It is found in the membrane. Its function is as follows. Mediates the voltage-dependent potassium ion permeability of excitable membranes. Assuming opened or closed conformations in response to the voltage difference across the membrane, the protein forms a potassium-selective channel through which potassium ions may pass in accordance with their electrochemical gradient. The polypeptide is Shaker-related potassium channel tsha2 (Oncorhynchus mykiss (Rainbow trout)).